The following is a 640-amino-acid chain: MKNKNSEQNTHSTIGEQDIHYFHEGKHIYAYEFMGAHKACEEGIEGIRFTTWAPNAKSICVIGDFNYWQVEDKNYMEPITDAGLWSVFIPNAKNGDKYKFVVTNKDTNNYVYKSDPYAFFSELRPNTASIITTETQYTWSDDKWLEKRAKTNYYDNPMNVYELHLASWKTKNGKFLTYDELNETLPQYIKEMGYTHVEFMPLHEHPLDASWGYQPTGFYSVNSRHGDIIGLKRLVDKLHNNDIGVILDWVPGHFCKDQHGLIYFDGSPCYEYQEPTKAINKGWGTHNFDLGRNEVKCFLISNAMYWINEFHIDGLRVDAVSNILYLNYDREDGQWIPNIYGGHENLEGIAFLKELNGVLKHTCKGVITIAEESSSWPDISTPVEKGGLGFDFKWNMGWMNDTLRYISLDPVYRKYHHNLITFSMVYHYSEKFILSISHDEVVHGKKSLINKMWGDLWNKYAGLRLYMSYMIGHPGKKLIFMGSEFVQFVEWREYEQLQWQVVDQYESHKQTLHFFKKLNDLYHNETALWQCDYDHHGFRWIDADNSQQSILSFIRSSKDNKQKLIFICNFTPVTYYDYHLGVPDAGSYKEVFNSDNLEFGGSGQVMATEIFSSPQSSHGFEQRITIKIPPMATLVLKLIK.

The Nucleophile role is filled by Asp318. Catalysis depends on Glu371, which acts as the Proton donor.

This sequence belongs to the glycosyl hydrolase 13 family. GlgB subfamily. As to quaternary structure, monomer.

It carries out the reaction Transfers a segment of a (1-&gt;4)-alpha-D-glucan chain to a primary hydroxy group in a similar glucan chain.. Its pathway is glycan biosynthesis; glycogen biosynthesis. Catalyzes the formation of the alpha-1,6-glucosidic linkages in glycogen by scission of a 1,4-alpha-linked oligosaccharide from growing alpha-1,4-glucan chains and the subsequent attachment of the oligosaccharide to the alpha-1,6 position. This chain is 1,4-alpha-glucan branching enzyme GlgB, found in Francisella tularensis subsp. mediasiatica (strain FSC147).